A 128-amino-acid polypeptide reads, in one-letter code: Small ribosomal subunit protein uS11 (128 aa).

Belongs to the universal ribosomal protein uS11 family. Part of the 30S ribosomal subunit. Interacts with proteins S7 and S18. Binds to IF-3.

In terms of biological role, located on the platform of the 30S subunit, it bridges several disparate RNA helices of the 16S rRNA. Forms part of the Shine-Dalgarno cleft in the 70S ribosome. This Desulforudis audaxviator (strain MP104C) protein is Small ribosomal subunit protein uS11.